The sequence spans 216 residues: Probable GTP-binding protein EngB (216 aa).

The 175-residue stretch at 30–204 (SGLEVAFAGR…QMVLAGWLDL (175 aa)) folds into the EngB-type G domain. Residues 38-45 (GRSNAGKS), 64-68 (GRTQL), 82-85 (DLPG), 149-152 (TKAD), and 182-185 (LFSA) contribute to the GTP site. Residues Ser45 and Thr66 each coordinate Mg(2+).

It belongs to the TRAFAC class TrmE-Era-EngA-EngB-Septin-like GTPase superfamily. EngB GTPase family. The cofactor is Mg(2+).

In terms of biological role, necessary for normal cell division and for the maintenance of normal septation. The sequence is that of Probable GTP-binding protein EngB from Ectopseudomonas mendocina (strain ymp) (Pseudomonas mendocina).